The following is a 338-amino-acid chain: 26S proteasome regulatory subunit RPN8 (338 aa).

The residue at position 2 (serine 2) is an N-acetylserine. Residues valine 8–valine 143 enclose the MPN domain. Over residues isoleucine 301 to alanine 326 the composition is skewed to basic and acidic residues. Residues isoleucine 301–asparagine 338 form a disordered region. 3 positions are modified to phosphoserine: serine 314, serine 317, and serine 319. Threonine 327 carries the phosphothreonine modification.

It belongs to the peptidase M67A family. In terms of processing, N-acetylated by NAT1.

Its function is as follows. Acts as a regulatory subunit of the 26S proteasome which is involved in the ATP-dependent degradation of ubiquitinated proteins. This chain is 26S proteasome regulatory subunit RPN8 (RPN8), found in Saccharomyces cerevisiae (strain ATCC 204508 / S288c) (Baker's yeast).